The following is a 249-amino-acid chain: Phosphoserine phosphatase (249 aa).

The protein belongs to the HAD-like hydrolase superfamily. In terms of assembly, homodimer. Mg(2+) serves as cofactor. Co(2+) is required as a cofactor.

The catalysed reaction is O-phospho-L-serine + H2O = L-serine + phosphate. The enzyme catalyses O-phospho-D-serine + H2O = D-serine + phosphate. The protein operates within amino-acid biosynthesis; L-serine biosynthesis; L-serine from 3-phospho-D-glycerate: step 3/3. In terms of biological role, catalyzes the last step of the phosphorylated serine biosynthetic pathway, i.e. dephosphorylation of O-phospho-L-serine to form L-serine. Is also able to dephosphorylate O-phospho-D-serine with similar efficiency. Displays a poor activity on L-phosphothreonine, and cannot use L-phosphotyrosine, pyridoxal phosphate, glucose 6-phosphate, or fructose 6-phosphate as substrates. This Thermus thermophilus (strain ATCC BAA-163 / DSM 7039 / HB27) protein is Phosphoserine phosphatase.